We begin with the raw amino-acid sequence, 259 residues long: Adenosylcobinamide-GDP ribazoletransferase (259 aa).

The next 6 membrane-spanning stretches (helical) occupy residues Ala-37 to Ser-57, Val-58 to Leu-78, Ala-118 to Phe-138, Val-143 to Phe-163, Ala-195 to Leu-215, and Leu-237 to Ala-257.

Belongs to the CobS family. It depends on Mg(2+) as a cofactor.

The protein resides in the cell inner membrane. The enzyme catalyses alpha-ribazole + adenosylcob(III)inamide-GDP = adenosylcob(III)alamin + GMP + H(+). The catalysed reaction is alpha-ribazole 5'-phosphate + adenosylcob(III)inamide-GDP = adenosylcob(III)alamin 5'-phosphate + GMP + H(+). It participates in cofactor biosynthesis; adenosylcobalamin biosynthesis; adenosylcobalamin from cob(II)yrinate a,c-diamide: step 7/7. In terms of biological role, joins adenosylcobinamide-GDP and alpha-ribazole to generate adenosylcobalamin (Ado-cobalamin). Also synthesizes adenosylcobalamin 5'-phosphate from adenosylcobinamide-GDP and alpha-ribazole 5'-phosphate. This chain is Adenosylcobinamide-GDP ribazoletransferase, found in Shewanella piezotolerans (strain WP3 / JCM 13877).